Reading from the N-terminus, the 182-residue chain is Inosine/xanthosine triphosphatase (182 aa).

Residues Asp38 and Glu68 each coordinate Mg(2+). 68 to 69 provides a ligand contact to substrate; that stretch reads EA.

This sequence belongs to the YjjX NTPase family. As to quaternary structure, homodimer. The cofactor is Mg(2+). Requires Mn(2+) as cofactor.

It catalyses the reaction XTP + H2O = XDP + phosphate + H(+). The catalysed reaction is ITP + H2O = IDP + phosphate + H(+). Its function is as follows. Phosphatase that hydrolyzes non-canonical purine nucleotides such as XTP and ITP to their respective diphosphate derivatives. Probably excludes non-canonical purines from DNA/RNA precursor pool, thus preventing their incorporation into DNA/RNA and avoiding chromosomal lesions. The sequence is that of Inosine/xanthosine triphosphatase from Erwinia tasmaniensis (strain DSM 17950 / CFBP 7177 / CIP 109463 / NCPPB 4357 / Et1/99).